The chain runs to 598 residues: Beta-fructofuranosidase, insoluble isoenzyme 2 (598 aa).

A signal peptide spans 1–25 (MGVLGSRVAWAWLVQLLLLQQLAGA). D69 is a catalytic residue. 3 N-linked (GlcNAc...) asparagine glycosylation sites follow: N164, N189, and N348.

The protein belongs to the glycosyl hydrolase 32 family.

The protein localises to the secreted. It is found in the extracellular space. The protein resides in the apoplast. Its subcellular location is the cell wall. It catalyses the reaction Hydrolysis of terminal non-reducing beta-D-fructofuranoside residues in beta-D-fructofuranosides.. Its function is as follows. May play a role in sucrose partitioning during seed development. The protein is Beta-fructofuranosidase, insoluble isoenzyme 2 (CIN2) of Oryza sativa subsp. indica (Rice).